The primary structure comprises 200 residues: Holliday junction branch migration complex subunit RuvA (200 aa).

The domain I stretch occupies residues 1-65 (MYEYIKGTLT…ETEHVLYGFS (65 aa)). The segment at 66-144 (SRAEKECFRL…TLMPLYLEEP (79 aa)) is domain II. The tract at residues 145–149 (VVPSS) is flexible linker. The domain III stretch occupies residues 150-200 (TANSSFKEGIGALMNLGFSRLAADRMMTEAVKELSEEASVAELLPIALRKS).

Belongs to the RuvA family. Homotetramer. Forms an RuvA(8)-RuvB(12)-Holliday junction (HJ) complex. HJ DNA is sandwiched between 2 RuvA tetramers; dsDNA enters through RuvA and exits via RuvB. An RuvB hexamer assembles on each DNA strand where it exits the tetramer. Each RuvB hexamer is contacted by two RuvA subunits (via domain III) on 2 adjacent RuvB subunits; this complex drives branch migration. In the full resolvosome a probable DNA-RuvA(4)-RuvB(12)-RuvC(2) complex forms which resolves the HJ.

It is found in the cytoplasm. The RuvA-RuvB-RuvC complex processes Holliday junction (HJ) DNA during genetic recombination and DNA repair, while the RuvA-RuvB complex plays an important role in the rescue of blocked DNA replication forks via replication fork reversal (RFR). RuvA specifically binds to HJ cruciform DNA, conferring on it an open structure. The RuvB hexamer acts as an ATP-dependent pump, pulling dsDNA into and through the RuvAB complex. HJ branch migration allows RuvC to scan DNA until it finds its consensus sequence, where it cleaves and resolves the cruciform DNA. The polypeptide is Holliday junction branch migration complex subunit RuvA (Chlamydia trachomatis serovar A (strain ATCC VR-571B / DSM 19440 / HAR-13)).